We begin with the raw amino-acid sequence, 202 residues long: Superoxide dismutase [Mn] (202 aa).

Residues histidine 27, histidine 82, aspartate 164, and histidine 168 each contribute to the Mn(2+) site.

This sequence belongs to the iron/manganese superoxide dismutase family. As to quaternary structure, homodimer. Mn(2+) serves as cofactor.

It catalyses the reaction 2 superoxide + 2 H(+) = H2O2 + O2. In terms of biological role, destroys superoxide anion radicals which are normally produced within the cells and which are toxic to biological systems. The sequence is that of Superoxide dismutase [Mn] (sodA) from Listeria innocua serovar 6a (strain ATCC BAA-680 / CLIP 11262).